We begin with the raw amino-acid sequence, 116 residues long: Large ribosomal subunit protein bL19 (116 aa).

It belongs to the bacterial ribosomal protein bL19 family.

This protein is located at the 30S-50S ribosomal subunit interface and may play a role in the structure and function of the aminoacyl-tRNA binding site. The protein is Large ribosomal subunit protein bL19 of Mycoplasmopsis agalactiae (strain NCTC 10123 / CIP 59.7 / PG2) (Mycoplasma agalactiae).